We begin with the raw amino-acid sequence, 189 residues long: MyoD family inhibitor domain-containing protein 2 (189 aa).

The MDFI domain maps to 28–188 (KEDTQLTNAK…LAMEISEICY (161 aa)).

It belongs to the MDFI family.

The chain is MyoD family inhibitor domain-containing protein 2 from Homo sapiens (Human).